The sequence spans 367 residues: Histidinol-phosphate aminotransferase 1 (367 aa).

An N6-(pyridoxal phosphate)lysine modification is found at K229.

It belongs to the class-II pyridoxal-phosphate-dependent aminotransferase family. Histidinol-phosphate aminotransferase subfamily. Homodimer. Pyridoxal 5'-phosphate serves as cofactor.

The catalysed reaction is L-histidinol phosphate + 2-oxoglutarate = 3-(imidazol-4-yl)-2-oxopropyl phosphate + L-glutamate. It participates in amino-acid biosynthesis; L-histidine biosynthesis; L-histidine from 5-phospho-alpha-D-ribose 1-diphosphate: step 7/9. This chain is Histidinol-phosphate aminotransferase 1 (hisC1), found in Mesorhizobium japonicum (strain LMG 29417 / CECT 9101 / MAFF 303099) (Mesorhizobium loti (strain MAFF 303099)).